We begin with the raw amino-acid sequence, 125 residues long: Small ribosomal subunit protein uS13 (125 aa).

Residues Pro-97–Ser-125 form a disordered region. The span at Gln-101–Ser-125 shows a compositional bias: basic residues.

The protein belongs to the universal ribosomal protein uS13 family. In terms of assembly, part of the 30S ribosomal subunit. Forms a loose heterodimer with protein S19. Forms two bridges to the 50S subunit in the 70S ribosome.

In terms of biological role, located at the top of the head of the 30S subunit, it contacts several helices of the 16S rRNA. In the 70S ribosome it contacts the 23S rRNA (bridge B1a) and protein L5 of the 50S subunit (bridge B1b), connecting the 2 subunits; these bridges are implicated in subunit movement. Contacts the tRNAs in the A and P-sites. The protein is Small ribosomal subunit protein uS13 of Thermotoga maritima (strain ATCC 43589 / DSM 3109 / JCM 10099 / NBRC 100826 / MSB8).